Reading from the N-terminus, the 118-residue chain is Small ribosomal subunit protein uS13 (118 aa).

The tract at residues 93 to 118 (KGLPVRGQRTKTNARTRKGPRKPIRK) is disordered.

Belongs to the universal ribosomal protein uS13 family. In terms of assembly, part of the 30S ribosomal subunit. Forms a loose heterodimer with protein S19. Forms two bridges to the 50S subunit in the 70S ribosome.

Its function is as follows. Located at the top of the head of the 30S subunit, it contacts several helices of the 16S rRNA. In the 70S ribosome it contacts the 23S rRNA (bridge B1a) and protein L5 of the 50S subunit (bridge B1b), connecting the 2 subunits; these bridges are implicated in subunit movement. Contacts the tRNAs in the A and P-sites. The protein is Small ribosomal subunit protein uS13 of Ectopseudomonas mendocina (strain ymp) (Pseudomonas mendocina).